A 326-amino-acid polypeptide reads, in one-letter code: MVSDNEMGLVLAVSSSVFIGSSFILKKKGLKRAAANGTRAGFGGYTYLLEPLWWVGLVTMTFGEIANFVAYVYAPAVLVTPLGALSIIISAVLAHFLLDEKLRKMGVWGCVCCIVGSVMIVIHAPQEQTPNSVEEIWKLAMQPAFLIYVAISMSIVLALILYCEPLCGQTNILVYIGICSLMGSLTVMSIKAVGIAIKLTFEGINQIWYPETWFFAMVAAICVVMQMIYLNKALDTFNAAIVSPIYYVMFTTLTIVASAIMFKDWNGQNTDSIASEICGFITVLTGTVILHSTREEEQASPRRMRWQDSGKSFDEEHLTSLYSPEY.

Residues 1-4 (MVSD) lie on the Extracellular side of the membrane. A helical membrane pass occupies residues 5–25 (NEMGLVLAVSSSVFIGSSFIL). Residues 26–51 (KKKGLKRAAANGTRAGFGGYTYLLEP) lie on the Cytoplasmic side of the membrane. A helical membrane pass occupies residues 52-72 (LWWVGLVTMTFGEIANFVAYV). Over 73-76 (YAPA) the chain is Extracellular. A helical membrane pass occupies residues 77-97 (VLVTPLGALSIIISAVLAHFL). Topologically, residues 98-104 (LDEKLRK) are cytoplasmic. A helical transmembrane segment spans residues 105–125 (MGVWGCVCCIVGSVMIVIHAP). The Extracellular portion of the chain corresponds to 126-142 (QEQTPNSVEEIWKLAMQ). The helical transmembrane segment at 143 to 163 (PAFLIYVAISMSIVLALILYC) threads the bilayer. At 164 to 169 (EPLCGQ) the chain is on the cytoplasmic side. The helical transmembrane segment at 170-190 (TNILVYIGICSLMGSLTVMSI) threads the bilayer. The Extracellular portion of the chain corresponds to 191–209 (KAVGIAIKLTFEGINQIWY). The chain crosses the membrane as a helical span at residues 210–230 (PETWFFAMVAAICVVMQMIYL). Residues 231 to 240 (NKALDTFNAA) lie on the Cytoplasmic side of the membrane. Residues 241–261 (IVSPIYYVMFTTLTIVASAIM) traverse the membrane as a helical segment. The Extracellular portion of the chain corresponds to 262–272 (FKDWNGQNTDS). Residues 273-293 (IASEICGFITVLTGTVILHST) traverse the membrane as a helical segment. Over 294-326 (REEEQASPRRMRWQDSGKSFDEEHLTSLYSPEY) the chain is Cytoplasmic.

Belongs to the NIPA (TC 2.A.7) family. Homodimer.

It is found in the cell membrane. Its subcellular location is the early endosome. In terms of biological role, acts as a Mg(2+) transporter. Can also transport other divalent cations such as Fe(2+), Sr(2+), Ba(2+), Mn(2+) and Co(2+) but to a much less extent than Mg(2+). This Arabidopsis thaliana (Mouse-ear cress) protein is Probable magnesium transporter NIPA7.